The primary structure comprises 137 residues: Integration host factor subunit beta (137 aa).

Residues 75-92 (KRVPHFKAGKELRERVDR) are compositionally biased toward basic and acidic residues. Positions 75–137 (KRVPHFKAGK…EGGGLNLARS (63 aa)) are disordered. The span at 128–137 (EGGGLNLARS) shows a compositional bias: gly residues.

Belongs to the bacterial histone-like protein family. Heterodimer of an alpha and a beta chain.

Functionally, this protein is one of the two subunits of integration host factor, a specific DNA-binding protein that functions in genetic recombination as well as in transcriptional and translational control. In Cupriavidus pinatubonensis (strain JMP 134 / LMG 1197) (Cupriavidus necator (strain JMP 134)), this protein is Integration host factor subunit beta.